Reading from the N-terminus, the 634-residue chain is Threonine--tRNA ligase (634 aa).

The 61-residue stretch at 1–61 folds into the TGS domain; that stretch reads MINIRFPDGS…NSNCELRLIT (61 aa). Residues 241-532 are catalytic; that stretch reads DHRKIGKVLD…LIEHYAGNLP (292 aa). Zn(2+) is bound by residues C332, H383, and H509.

This sequence belongs to the class-II aminoacyl-tRNA synthetase family. In terms of assembly, homodimer. Requires Zn(2+) as cofactor.

Its subcellular location is the cytoplasm. The enzyme catalyses tRNA(Thr) + L-threonine + ATP = L-threonyl-tRNA(Thr) + AMP + diphosphate + H(+). Functionally, catalyzes the attachment of threonine to tRNA(Thr) in a two-step reaction: L-threonine is first activated by ATP to form Thr-AMP and then transferred to the acceptor end of tRNA(Thr). Also edits incorrectly charged L-seryl-tRNA(Thr). The protein is Threonine--tRNA ligase of Francisella tularensis subsp. tularensis (strain WY96-3418).